The following is an 83-amino-acid chain: MAELGEADEAELQRLVAAEQQKAQFTAQVHHFMELCWDKCVEKPGSRLDSRTENCLSSCVDRFIDTTLAITGRFAQIVQKGGQ.

Position 2 is an N-acetylalanine (Ala-2). The Twin CX3C motif motif lies at 36-59 (CWDKCVEKPGSRLDSRTENCLSSC). 2 disulfides stabilise this stretch: Cys-36/Cys-59 and Cys-40/Cys-55.

This sequence belongs to the small Tim family. As to quaternary structure, heterohexamer; possibly composed of 3 copies of TIMM8B and 3 copies of TIMM13, named soluble 70 kDa complex. Associates with the TIM22 complex, whose core is composed of TIMM22.

Its subcellular location is the mitochondrion inner membrane. Probable mitochondrial intermembrane chaperone that participates in the import and insertion of some multi-pass transmembrane proteins into the mitochondrial inner membrane. Also required for the transfer of beta-barrel precursors from the TOM complex to the sorting and assembly machinery (SAM complex) of the outer membrane. Acts as a chaperone-like protein that protects the hydrophobic precursors from aggregation and guide them through the mitochondrial intermembrane space. The polypeptide is Mitochondrial import inner membrane translocase subunit Tim8 B (Timm8b) (Mus musculus (Mouse)).